The primary structure comprises 287 residues: Ketoacyl reductase HetN (287 aa).

11-35 (LTGASRGLGVYIARALAKEQATVVC) contributes to the NAD(+) binding site. Ser-142 is a substrate binding site. The active-site Proton acceptor is the Tyr-155.

Belongs to the short-chain dehydrogenases/reductases (SDR) family.

May be involved in repressing heterocyst differentiation and may be essential for preventing all vegetative cells from differentiating. This Nostoc sp. (strain PCC 7120 / SAG 25.82 / UTEX 2576) protein is Ketoacyl reductase HetN (hetN).